An 870-amino-acid polypeptide reads, in one-letter code: MAETLLSFGVEKLWDLLVRESDRFQGVKKQFNELRSDLNKLRCFLEDADAKKHQSAMVSNTVKEVKEIVYDTEDIIETFLRKKQLGRTRGMKKRIKEFACVLPDRRKIAIDMEGLSKRIAKKDKRNMRQTFSNNNESVLVGLEENVKKLVGHLVEVEDSSQVVSITGMGGIGKTTLARQVFNHETVKSHFAQLAWVCVSQQFTRKYVWQTILRKVGPEYIKLEMTEDELQEKLFRLLGTRKALIVLDDIWREEDWDMIEPIFPLGKGWKVLLTSRNEGVALRANPNGFIFKPDCLTPEESWTIFRRIVFPGENTTEYKVDEKMEELGKQMIKHCGGLPLALKVLGGLLVVHFTLDEWKRIYGNIKSHIVGGTSFNDKNMSSVYHILHLSFEELPIYLKHCFLYLAQFPEDFTIDLEKLSYYWAAEGMPRPRYYDGATIRKVGDGYIEELVKRNMVISERDARTRRFETCHLHDIVREVCLKAEEENLIETENSKSPSKPRRLVVKGGDKTDMEGKLKNPKLRSLLFIEELGGYRGFEVWFTRLQLMRVLDLHGVEFGGELPSSIGLLIHLRYLSLYRAKASHLPSSMQNLKMLLYLNLCVQESCYIYIPNFLKEMLELKYLSLPLRMDDKVKLELGNLVNLEKLENFSTEHGGVGDLQFMTRLRALSIYIRGRLNMKTLSSSLSKLRDLENLTICYYPMYAPMSGIEGLVLDCDQLKHLNLRIYMPRLPDEQHFPWHLRNISLAECCLKEDPMPILEKLLQLNEVSLSHQSFCGKRMVCSDGGFPQLQKLDLCGLEEWEEWIVEEGSMPRLHKLTIRNDPKLKELPDGLKFITSLKEVHVILNNWDFKKKLSRGGEDYYKVQHIPLVRFL.

In terms of domain architecture, NB-ARC spans aspartate 123–tyrosine 432. Glycine 167–threonine 174 is a binding site for ATP. 6 LRR repeats span residues leucine 543–leucine 567, isoleucine 568–leucine 590, methionine 703–proline 726, proline 735–lysine 758, leucine 759–glutamine 786, and methionine 808–threonine 833.

It belongs to the disease resistance NB-LRR family.

Probable disease resistance protein. This Arabidopsis thaliana (Mouse-ear cress) protein is Probable disease resistance protein At1g59620.